A 284-amino-acid polypeptide reads, in one-letter code: BTB/POZ domain-containing protein 2 (284 aa).

One can recognise a BTB domain in the interval 37–108 (SDTTLIIKGE…LYCDSPRIPA (72 aa)).

As to quaternary structure, interacts with cul3.

It localises to the cytoplasm. The protein resides in the nucleus. It functions in the pathway protein modification; protein ubiquitination. Functionally, probable substrate-specific adapter of an E3 ubiquitin-protein ligase complex which mediates the ubiquitination and subsequent proteasomal degradation of target proteins. In Schizosaccharomyces pombe (strain 972 / ATCC 24843) (Fission yeast), this protein is BTB/POZ domain-containing protein 2 (btb2).